The primary structure comprises 479 residues: Ribosomal RNA small subunit methyltransferase F (479 aa).

Residues 125–131 (AAAPGSK), Glu-149, Asp-176, and Asp-194 contribute to the S-adenosyl-L-methionine site. The Nucleophile role is filled by Cys-247.

The protein belongs to the class I-like SAM-binding methyltransferase superfamily. RsmB/NOP family.

It is found in the cytoplasm. The enzyme catalyses cytidine(1407) in 16S rRNA + S-adenosyl-L-methionine = 5-methylcytidine(1407) in 16S rRNA + S-adenosyl-L-homocysteine + H(+). Specifically methylates the cytosine at position 1407 (m5C1407) of 16S rRNA. This chain is Ribosomal RNA small subunit methyltransferase F, found in Shigella boydii serotype 18 (strain CDC 3083-94 / BS512).